Here is a 210-residue protein sequence, read N- to C-terminus: MENSEKLANSKEVIAYIAERFPKCFILEGEAKPLKIGIFQDLAERLSDDSKVSKTQLRAGLRQYTSSWRYLHGVKPGASRVDLDGNPCGELEEEHVEHAKASLEESKAKVAARRKEQAKKAREEAKAKKPARATTPPKRRPQPAAVAKKQEKPVETRALNSDEITVGNNVSVNMGKGNMPATIVEINKDDVRIRLSNGLQMVVKAENLRS.

The segment covering 98-127 has biased composition (basic and acidic residues); that stretch reads HAKASLEESKAKVAARRKEQAKKAREEAKA. Positions 98-155 are disordered; it reads HAKASLEESKAKVAARRKEQAKKAREEAKAKKPARATTPPKRRPQPAAVAKKQEKPVE.

The protein belongs to the ProQ family.

The protein localises to the cytoplasm. In terms of biological role, RNA chaperone with significant RNA binding, RNA strand exchange and RNA duplexing activities. This Aliivibrio salmonicida (strain LFI1238) (Vibrio salmonicida (strain LFI1238)) protein is RNA chaperone ProQ.